The chain runs to 156 residues: Snaclec A15 (156 aa).

The signal sequence occupies residues 1–23 (MGRFIFVRFGLLVVFLSLSGTGA). 3 cysteine pairs are disulfide-bonded: cysteine 27-cysteine 38, cysteine 55-cysteine 152, and cysteine 127-cysteine 144. Positions 34–153 (YDQHCYKAFD…CGDDYPFVCK (120 aa)) constitute a C-type lectin domain. Asparagine 141 carries N-linked (GlcNAc...) asparagine glycosylation.

It belongs to the snaclec family. As to quaternary structure, heterodimer; disulfide-linked. As to expression, expressed by the venom gland.

The protein localises to the secreted. Interferes with one step of hemostasis (modulation of platelet aggregation, or coagulation cascade, for example). The protein is Snaclec A15 of Macrovipera lebetinus (Levantine viper).